Reading from the N-terminus, the 163-residue chain is Phosphopantetheine adenylyltransferase (163 aa).

S8 provides a ligand contact to substrate. Residues 8–9 (SF) and H16 contribute to the ATP site. Substrate is bound by residues K40, T72, and R86. ATP-binding positions include 87–89 (GLR), E97, and 122–128 (HSFLSSS).

The protein belongs to the bacterial CoaD family. As to quaternary structure, homohexamer. The cofactor is Mg(2+).

It is found in the cytoplasm. The catalysed reaction is (R)-4'-phosphopantetheine + ATP + H(+) = 3'-dephospho-CoA + diphosphate. It participates in cofactor biosynthesis; coenzyme A biosynthesis; CoA from (R)-pantothenate: step 4/5. Reversibly transfers an adenylyl group from ATP to 4'-phosphopantetheine, yielding dephospho-CoA (dPCoA) and pyrophosphate. This is Phosphopantetheine adenylyltransferase from Synechococcus sp. (strain CC9902).